We begin with the raw amino-acid sequence, 235 residues long: Glutathione S-transferase 1 (235 aa).

The GST N-terminal domain occupies 36-113 (EKYTLTYFNG…LLGGRFGLLG (78 aa)). Glutathione-binding positions include Y42, W73, K77, V85, and 97–98 (ES). In terms of domain architecture, GST C-terminal spans 115 to 235 (NDWEEAKIMA…WIKKRPKTYF (121 aa)).

Belongs to the GST superfamily. In terms of assembly, homodimer.

It carries out the reaction RX + glutathione = an S-substituted glutathione + a halide anion + H(+). In Onchocerca volvulus, this protein is Glutathione S-transferase 1 (GST1).